We begin with the raw amino-acid sequence, 422 residues long: Elongation factor 1-alpha (422 aa).

The tr-type G domain maps to 5–221 (KPHMNLAVIG…NNLKVPEKPS (217 aa)). The interval 14-21 (GHIDHGKS) is G1. 14–21 (GHIDHGKS) provides a ligand contact to GTP. Ser-21 serves as a coordination point for Mg(2+). The tract at residues 70–74 (GITID) is G2. Residues 91 to 94 (DCPG) form a G3 region. GTP is bound by residues 91–95 (DCPGH) and 146–149 (NKMD). Residues 146-149 (NKMD) are G4. The segment at 185 to 187 (SAF) is G5.

It belongs to the TRAFAC class translation factor GTPase superfamily. Classic translation factor GTPase family. EF-Tu/EF-1A subfamily.

It is found in the cytoplasm. The catalysed reaction is GTP + H2O = GDP + phosphate + H(+). Its function is as follows. GTP hydrolase that promotes the GTP-dependent binding of aminoacyl-tRNA to the A-site of ribosomes during protein biosynthesis. This is Elongation factor 1-alpha from Methanosarcina barkeri (strain Fusaro / DSM 804).